The sequence spans 381 residues: Arf-GAP with dual PH domain-containing protein 2 (381 aa).

The Arf-GAP domain maps to 9 to 132 (KRLLELLQAA…TAIDKAVSHP (124 aa)). The C4-type zinc finger occupies 25 to 48 (CADCGAADPDWASYKLGIFICLHC). 2 PH domains span residues 132–233 (PGNR…AARL) and 255–361 (NYLK…GVLS).

The protein localises to the cytoplasm. It is found in the cell membrane. Functionally, GTPase-activating protein for the ADP ribosylation factor family (Potential). Binds phosphatidylinositol 3,4,5-trisphosphate (PtdInsP3) and inositol 1,3,4,5-tetrakisphosphate (InsP4). Possesses a stoichiometry of two binding sites for InsP4 with identical affinity. The chain is Arf-GAP with dual PH domain-containing protein 2 (Adap2) from Mus musculus (Mouse).